Here is a 212-residue protein sequence, read N- to C-terminus: Pyridoxine/pyridoxamine 5'-phosphate oxidase (212 aa).

Residues 7-10 (REEY) and Lys-65 contribute to the substrate site. Residues 60 to 65 (RTVLLK), 75 to 76 (FT), Lys-82, and Gln-104 contribute to the FMN site. 3 residues coordinate substrate: Tyr-122, Arg-126, and Ser-130. Residues 139–140 (QS) and Trp-184 contribute to the FMN site. A substrate-binding site is contributed by 190 to 192 (RLH). Arg-194 is a binding site for FMN.

The protein belongs to the pyridoxamine 5'-phosphate oxidase family. In terms of assembly, homodimer. It depends on FMN as a cofactor.

The catalysed reaction is pyridoxamine 5'-phosphate + O2 + H2O = pyridoxal 5'-phosphate + H2O2 + NH4(+). The enzyme catalyses pyridoxine 5'-phosphate + O2 = pyridoxal 5'-phosphate + H2O2. It functions in the pathway cofactor metabolism; pyridoxal 5'-phosphate salvage; pyridoxal 5'-phosphate from pyridoxamine 5'-phosphate: step 1/1. It participates in cofactor metabolism; pyridoxal 5'-phosphate salvage; pyridoxal 5'-phosphate from pyridoxine 5'-phosphate: step 1/1. Catalyzes the oxidation of either pyridoxine 5'-phosphate (PNP) or pyridoxamine 5'-phosphate (PMP) into pyridoxal 5'-phosphate (PLP). The sequence is that of Pyridoxine/pyridoxamine 5'-phosphate oxidase from Rippkaea orientalis (strain PCC 8801 / RF-1) (Cyanothece sp. (strain PCC 8801)).